The sequence spans 141 residues: Neuropeptides CP2 (141 aa).

The N-terminal stretch at 1-26 (MDSRICTSFARLMASALCVSTLLVTA) is a signal peptide. The segment at 75-94 (KVDMPLPRQRTSSRSSERWA) is disordered. Residue histidine 140 is modified to Histidine amide.

In terms of tissue distribution, neurons.

Its subcellular location is the secreted. Mediates intrinsic neuromodulation. The chain is Neuropeptides CP2 (CP2PP) from Aplysia californica (California sea hare).